Consider the following 429-residue polypeptide: Probable M18 family aminopeptidase 2 (429 aa).

Positions 82, 156, and 401 each coordinate Zn(2+).

It belongs to the peptidase M18 family. Zn(2+) is required as a cofactor.

The protein is Probable M18 family aminopeptidase 2 of Pseudomonas paraeruginosa (strain DSM 24068 / PA7) (Pseudomonas aeruginosa (strain PA7)).